Consider the following 240-residue polypeptide: MTESQDTPITTDGEARPHRRIKSFVMRAGRMTEGQQRGLDQGGPLYILPLAESPVDYDQVFGRSAPRTLEIGFGMGHSLLEMAAAAPEQDFIGVEVHRPGVGALLNGVLTEGLKNLRVYDCDAIEVLNRCVADNSLDRLMLFFPDPWHKARHHKRRIVQLEFAELVRRKLKPGGIFHMATDWEPYAEYMLEVMSAAPGYRNLAADGAYVPRPEERPITKFERRGERLGHGVWDLKFEKVG.

Residues 1–10 (MTESQDTPIT) are compositionally biased toward polar residues. The interval 1-20 (MTESQDTPITTDGEARPHRR) is disordered. Residues Glu-70, Glu-95, Asp-122, and Asp-145 each coordinate S-adenosyl-L-methionine. The active site involves Asp-145. Substrate-binding positions include Lys-149, Asp-181, and 218–221 (TKFE).

Belongs to the class I-like SAM-binding methyltransferase superfamily. TrmB family.

The catalysed reaction is guanosine(46) in tRNA + S-adenosyl-L-methionine = N(7)-methylguanosine(46) in tRNA + S-adenosyl-L-homocysteine. It participates in tRNA modification; N(7)-methylguanine-tRNA biosynthesis. Functionally, catalyzes the formation of N(7)-methylguanine at position 46 (m7G46) in tRNA. This Pseudomonas putida (strain W619) protein is tRNA (guanine-N(7)-)-methyltransferase.